The following is a 90-amino-acid chain: MIKKSFISVISHEEKEKNRGSVTFQILSLTNRIRKLSSHLELHRKDYLSQRGLRKILGKRQRMLSYLSKNNRIRYKELINQLDIRESKTR.

Belongs to the universal ribosomal protein uS15 family. As to quaternary structure, part of the 30S ribosomal subunit.

Its subcellular location is the plastid. The protein localises to the chloroplast. This is Small ribosomal subunit protein uS15c (rps15) from Morus indica (Mulberry).